Here is an 81-residue protein sequence, read N- to C-terminus: Photosystem I iron-sulfur center (81 aa).

4Fe-4S ferredoxin-type domains follow at residues 2–31 (SHSV…MIPW) and 39–68 (IAPA…VRVY). The [4Fe-4S] cluster site is built by cysteine 11, cysteine 14, cysteine 17, cysteine 21, cysteine 48, cysteine 51, cysteine 54, and cysteine 58.

As to quaternary structure, the eukaryotic PSI reaction center is composed of at least 11 subunits. It depends on [4Fe-4S] cluster as a cofactor.

The protein localises to the plastid. Its subcellular location is the chloroplast thylakoid membrane. It carries out the reaction reduced [plastocyanin] + hnu + oxidized [2Fe-2S]-[ferredoxin] = oxidized [plastocyanin] + reduced [2Fe-2S]-[ferredoxin]. Functionally, apoprotein for the two 4Fe-4S centers FA and FB of photosystem I (PSI); essential for photochemical activity. FB is the terminal electron acceptor of PSI, donating electrons to ferredoxin. The C-terminus interacts with PsaA/B/D and helps assemble the protein into the PSI complex. Required for binding of PsaD and PsaE to PSI. PSI is a plastocyanin-ferredoxin oxidoreductase, converting photonic excitation into a charge separation, which transfers an electron from the donor P700 chlorophyll pair to the spectroscopically characterized acceptors A0, A1, FX, FA and FB in turn. This is Photosystem I iron-sulfur center from Drimys granadensis.